Reading from the N-terminus, the 240-residue chain is Large ribosomal subunit protein uL1c (240 aa).

Belongs to the universal ribosomal protein uL1 family. Part of the 50S ribosomal subunit.

The protein localises to the plastid. It is found in the chloroplast. Binds directly to 23S rRNA. Might be involved in E site tRNA release (Potential). This is Large ribosomal subunit protein uL1c (rpl1) from Cyanidium caldarium (Red alga).